Consider the following 529-residue polypeptide: Bifunctional purine biosynthesis protein PurH (529 aa).

Residues 1–148 form the MGS-like domain; the sequence is MNNARPIRRA…KNHKDVVIVV (148 aa).

The protein belongs to the PurH family.

The enzyme catalyses (6R)-10-formyltetrahydrofolate + 5-amino-1-(5-phospho-beta-D-ribosyl)imidazole-4-carboxamide = 5-formamido-1-(5-phospho-D-ribosyl)imidazole-4-carboxamide + (6S)-5,6,7,8-tetrahydrofolate. The catalysed reaction is IMP + H2O = 5-formamido-1-(5-phospho-D-ribosyl)imidazole-4-carboxamide. The protein operates within purine metabolism; IMP biosynthesis via de novo pathway; 5-formamido-1-(5-phospho-D-ribosyl)imidazole-4-carboxamide from 5-amino-1-(5-phospho-D-ribosyl)imidazole-4-carboxamide (10-formyl THF route): step 1/1. It participates in purine metabolism; IMP biosynthesis via de novo pathway; IMP from 5-formamido-1-(5-phospho-D-ribosyl)imidazole-4-carboxamide: step 1/1. The polypeptide is Bifunctional purine biosynthesis protein PurH (Shewanella amazonensis (strain ATCC BAA-1098 / SB2B)).